The sequence spans 284 residues: Formamidopyrimidine-DNA glycosylase (284 aa).

Proline 2 functions as the Schiff-base intermediate with DNA in the catalytic mechanism. Glutamate 3 functions as the Proton donor in the catalytic mechanism. The Proton donor; for beta-elimination activity role is filled by lysine 61. DNA contacts are provided by histidine 95, arginine 115, and arginine 157. The FPG-type zinc finger occupies 243–277 (AVYGRAGQPCRRCGTAIVREPFMNRSSFRCPACQP). Residue arginine 267 is the Proton donor; for delta-elimination activity of the active site.

It belongs to the FPG family. In terms of assembly, monomer. The cofactor is Zn(2+).

The catalysed reaction is Hydrolysis of DNA containing ring-opened 7-methylguanine residues, releasing 2,6-diamino-4-hydroxy-5-(N-methyl)formamidopyrimidine.. It carries out the reaction 2'-deoxyribonucleotide-(2'-deoxyribose 5'-phosphate)-2'-deoxyribonucleotide-DNA = a 3'-end 2'-deoxyribonucleotide-(2,3-dehydro-2,3-deoxyribose 5'-phosphate)-DNA + a 5'-end 5'-phospho-2'-deoxyribonucleoside-DNA + H(+). In terms of biological role, involved in base excision repair of DNA damaged by oxidation or by mutagenic agents. Acts as a DNA glycosylase that recognizes and removes damaged bases. Has a preference for oxidized purines, such as 7,8-dihydro-8-oxoguanine (8-oxoG). Has AP (apurinic/apyrimidinic) lyase activity and introduces nicks in the DNA strand. Cleaves the DNA backbone by beta-delta elimination to generate a single-strand break at the site of the removed base with both 3'- and 5'-phosphates. The sequence is that of Formamidopyrimidine-DNA glycosylase from Acidothermus cellulolyticus (strain ATCC 43068 / DSM 8971 / 11B).